The chain runs to 386 residues: DNA-directed RNA polymerase subunit Rpo1C (386 aa).

This sequence belongs to the RNA polymerase beta' chain family. Part of the RNA polymerase complex.

The protein localises to the cytoplasm. The enzyme catalyses RNA(n) + a ribonucleoside 5'-triphosphate = RNA(n+1) + diphosphate. Functionally, DNA-dependent RNA polymerase (RNAP) catalyzes the transcription of DNA into RNA using the four ribonucleoside triphosphates as substrates. Forms part of the jaw domain. This Methanococcus vannielii (strain ATCC 35089 / DSM 1224 / JCM 13029 / OCM 148 / SB) protein is DNA-directed RNA polymerase subunit Rpo1C.